A 338-amino-acid chain; its full sequence is Ribosomal RNA small subunit methyltransferase H (338 aa).

S-adenosyl-L-methionine contacts are provided by residues 53–55 (GGH), aspartate 72, tyrosine 99, aspartate 123, and glutamine 130. Disordered stretches follow at residues 276–297 (EITP…PGMG) and 304–323 (TRGA…RSAP).

It belongs to the methyltransferase superfamily. RsmH family.

The protein resides in the cytoplasm. The catalysed reaction is cytidine(1402) in 16S rRNA + S-adenosyl-L-methionine = N(4)-methylcytidine(1402) in 16S rRNA + S-adenosyl-L-homocysteine + H(+). Functionally, specifically methylates the N4 position of cytidine in position 1402 (C1402) of 16S rRNA. The sequence is that of Ribosomal RNA small subunit methyltransferase H from Rhodococcus jostii (strain RHA1).